The chain runs to 279 residues: MMDIIREMIRADVGFEDITTEALIDRGTRVVADIVSREEGVVAGVEVAEMMAREFSISIIRWKDDGDPLSGGERVLTLEGDAMDILMVERTMLNLMMKMSGIATLTRSMLQRARAVNEGIRIAATRKTTPGLQWFEKQAVRIGGGDTHRFRLDDCAMIKDNHIAIVGNIEDAVRRVRDHVSFTKKVEVEVESPDDAVRAAEAGADIVLLDNMSPETIRNTLEELERRGLRDNVIVEASGGIKPDNIELYASTGVEVISMGFITASAHPVDLSLEIRGLK.

Residues Arg-90, 125-127, Arg-149, Lys-159, Glu-189, Asp-210, 238-240, and 259-261 contribute to the substrate site; these read TRK, SGG, and MGF.

It belongs to the NadC/ModD family. Hexamer formed by 3 homodimers.

It catalyses the reaction nicotinate beta-D-ribonucleotide + CO2 + diphosphate = quinolinate + 5-phospho-alpha-D-ribose 1-diphosphate + 2 H(+). It participates in cofactor biosynthesis; NAD(+) biosynthesis; nicotinate D-ribonucleotide from quinolinate: step 1/1. Functionally, involved in the catabolism of quinolinic acid (QA). The protein is Probable nicotinate-nucleotide pyrophosphorylase [carboxylating] (nadC) of Methanothermobacter thermautotrophicus (strain ATCC 29096 / DSM 1053 / JCM 10044 / NBRC 100330 / Delta H) (Methanobacterium thermoautotrophicum).